A 270-amino-acid polypeptide reads, in one-letter code: Diaminopimelate epimerase (270 aa).

Residues Asn-15, Gln-49, and Asn-66 each contribute to the substrate site. Cys-75 functions as the Proton donor in the catalytic mechanism. Residues Gly-76 to Asn-77, Asn-155, Asn-187, and Glu-204 to Arg-205 each bind substrate. Cys-213 acts as the Proton acceptor in catalysis. Gly-214–Ser-215 is a binding site for substrate.

This sequence belongs to the diaminopimelate epimerase family. In terms of assembly, homodimer.

The protein resides in the cytoplasm. The catalysed reaction is (2S,6S)-2,6-diaminopimelate = meso-2,6-diaminopimelate. The protein operates within amino-acid biosynthesis; L-lysine biosynthesis via DAP pathway; DL-2,6-diaminopimelate from LL-2,6-diaminopimelate: step 1/1. Catalyzes the stereoinversion of LL-2,6-diaminopimelate (L,L-DAP) to meso-diaminopimelate (meso-DAP), a precursor of L-lysine and an essential component of the bacterial peptidoglycan. The protein is Diaminopimelate epimerase of Rickettsia prowazekii (strain Madrid E).